The sequence spans 631 residues: Phosphomethylpyrimidine synthase (631 aa).

Residues asparagine 239, methionine 268, tyrosine 297, histidine 333, 353 to 355 (SRG), 394 to 397 (DGLR), and glutamate 433 each bind substrate. Histidine 437 provides a ligand contact to Zn(2+). Substrate is bound at residue tyrosine 460. Histidine 501 serves as a coordination point for Zn(2+). Residues cysteine 581, cysteine 584, and cysteine 589 each contribute to the [4Fe-4S] cluster site.

The protein belongs to the ThiC family. Homodimer. Requires [4Fe-4S] cluster as cofactor.

The enzyme catalyses 5-amino-1-(5-phospho-beta-D-ribosyl)imidazole + S-adenosyl-L-methionine = 4-amino-2-methyl-5-(phosphooxymethyl)pyrimidine + CO + 5'-deoxyadenosine + formate + L-methionine + 3 H(+). It participates in cofactor biosynthesis; thiamine diphosphate biosynthesis. Its function is as follows. Catalyzes the synthesis of the hydroxymethylpyrimidine phosphate (HMP-P) moiety of thiamine from aminoimidazole ribotide (AIR) in a radical S-adenosyl-L-methionine (SAM)-dependent reaction. The polypeptide is Phosphomethylpyrimidine synthase (Escherichia coli O139:H28 (strain E24377A / ETEC)).